A 471-amino-acid chain; its full sequence is Serine/threonine-protein kinase AtPK2/AtPK19 (471 aa).

The segment at 1–21 (MVSSQCSVANKNQTGKPFQKH) is disordered. The Protein kinase domain maps to 140–395 (FEVLKVVGQG…AEEIKKHKWF (256 aa)). Residues 146–154 (VGQGAFGKV) and K169 contribute to the ATP site. Catalysis depends on D263, which acts as the Proton acceptor. Positions 281 to 307 (DFGLAKEFEENTRSNSMCGTTEYMAPE) are activation loop. The residue at position 296 (S296) is a Phosphoserine; by PDPK1. An AGC-kinase C-terminal domain is found at 396 to 466 (KAINWKKLEA…VRPPHSFLHR (71 aa)). T455 carries the post-translational modification Phosphothreonine; by TOR.

The protein belongs to the protein kinase superfamily. AGC Ser/Thr protein kinase family. S6 kinase subfamily. In terms of assembly, interacts with TAP46. Binds to MRF1. In terms of processing, undergoes serine-specific autophosphorylation. Phosphorylated at Thr-455 by TOR.

The catalysed reaction is L-seryl-[protein] + ATP = O-phospho-L-seryl-[protein] + ADP + H(+). It carries out the reaction L-threonyl-[protein] + ATP = O-phospho-L-threonyl-[protein] + ADP + H(+). With respect to regulation, activated by PDK1. In terms of biological role, downstream effector of TOR signaling pathway. May be involved in adaptation of plant to cold or high-salt conditions. Mediates the phosphorylation of MRFs (e.g. MRF1). The chain is Serine/threonine-protein kinase AtPK2/AtPK19 (ATPK2) from Arabidopsis thaliana (Mouse-ear cress).